Here is a 681-residue protein sequence, read N- to C-terminus: Ribosomal L1 domain-containing protein CG13096 (681 aa).

Disordered regions lie at residues 1-248 (MVKV…AKSK) and 579-681 (DAAP…DDEE). A phosphoserine mark is found at S15 and S17. Positions 54–74 (VKKDAIKKEPEVSKKGAEKKQ) are enriched in basic and acidic residues. S89 carries the phosphoserine modification. Low complexity predominate over residues 103-112 (KPAASGAPVG). Phosphoserine is present on S128. Positions 189–217 (QAAPAKPAKAQPASQLQKKAKAVQKLSKP) are enriched in low complexity. Residues 599 to 610 (KESSSEGAKADA) show a composition bias toward basic and acidic residues. Acidic residues predominate over residues 611–681 (ESDEEEEVEE…EDDDDDDDEE (71 aa)).

This sequence belongs to the universal ribosomal protein uL1 family. Highly divergent.

The chain is Ribosomal L1 domain-containing protein CG13096 from Drosophila melanogaster (Fruit fly).